The following is a 528-amino-acid chain: Transcriptional activator protein UGA3 (528 aa).

The segment at residues 17-44 is a DNA-binding region (zn(2)-C6 fungal-type); the sequence is CITCKIRKKRCSEDKPVCRDCRRLSFPC. The short motif at 55-62 is the Nuclear localization signal element; it reads SLKKIKAD.

UGA3 proteins associate in oligomers, at least in the presence of inducer.

It is found in the nucleus. GABA-dependent positive regulation of genes required for catabolism of GABA (UGA4, UGA1, and UGA2). The chain is Transcriptional activator protein UGA3 (UGA3) from Saccharomyces cerevisiae (strain ATCC 204508 / S288c) (Baker's yeast).